The chain runs to 489 residues: Rhamnulokinase (489 aa).

13–17 serves as a coordination point for ATP; sequence ASSGR. Cys68 and Cys222 form a disulfide bridge. Residues Gly83 and 236 to 238 contribute to the substrate site; that span reads HDT. Asp237 acts as the Proton acceptor in catalysis. Thr259 contributes to the ATP binding site. Asn296 is a substrate binding site. ATP is bound at residue Gln304. A disulfide bond links Cys353 and Cys370. Gly402 provides a ligand contact to ATP. Cys413 and Cys417 are disulfide-bonded.

Belongs to the rhamnulokinase family. Requires Mg(2+) as cofactor.

It carries out the reaction L-rhamnulose + ATP = L-rhamnulose 1-phosphate + ADP + H(+). It participates in carbohydrate degradation; L-rhamnose degradation; glycerone phosphate from L-rhamnose: step 2/3. In terms of biological role, involved in the catabolism of L-rhamnose (6-deoxy-L-mannose). Catalyzes the transfer of the gamma-phosphate group from ATP to the 1-hydroxyl group of L-rhamnulose to yield L-rhamnulose 1-phosphate. The protein is Rhamnulokinase of Salmonella enteritidis PT4 (strain P125109).